Here is a 149-residue protein sequence, read N- to C-terminus: Large ribosomal subunit protein bL9 (149 aa).

It belongs to the bacterial ribosomal protein bL9 family.

In terms of biological role, binds to the 23S rRNA. This is Large ribosomal subunit protein bL9 from Haemophilus influenzae (strain PittEE).